The sequence spans 958 residues: Probable transport protein MmpL1 (958 aa).

A run of 12 helical transmembrane segments spans residues 19-39 (ALSL…NVVA), 192-212 (SLHT…FIAY), 216-236 (SAAL…RGII), 252-272 (VNVL…FLVG), 295-315 (TAHV…CLGF), 329-349 (AIGL…IIAV), 377-397 (WPGP…LALP), 762-782 (YDVM…MLGI), 791-811 (VIVG…VLIW), 814-834 (ILHM…MLAV), 868-888 (VVTI…ASDL), and 906-927 (TLVV…WFWW).

The protein belongs to the resistance-nodulation-cell division (RND) (TC 2.A.6) family. MmpL subfamily.

It is found in the cell membrane. The sequence is that of Probable transport protein MmpL1 (mmpL1) from Mycobacterium tuberculosis (strain CDC 1551 / Oshkosh).